A 349-amino-acid chain; its full sequence is tRNA pseudouridine synthase D (349 aa).

Phe-27 is a substrate binding site. The active-site Nucleophile is Asp-80. Asn-129 is a substrate binding site. The region spanning 155 to 303 (GVPNYFGAQR…VEAARRAMLL (149 aa)) is the TRUD domain. Phe-329 provides a ligand contact to substrate.

Belongs to the pseudouridine synthase TruD family.

It catalyses the reaction uridine(13) in tRNA = pseudouridine(13) in tRNA. Functionally, responsible for synthesis of pseudouridine from uracil-13 in transfer RNAs. This is tRNA pseudouridine synthase D from Citrobacter koseri (strain ATCC BAA-895 / CDC 4225-83 / SGSC4696).